We begin with the raw amino-acid sequence, 206 residues long: Large ribosomal subunit protein uL4 (206 aa).

Residues 63–94 (MYKQKGTGRARHHSARAPQFRGGGKAHGPVVR) form a disordered region. A compositionally biased stretch (basic residues) spans 64–77 (YKQKGTGRARHHSA).

This sequence belongs to the universal ribosomal protein uL4 family. As to quaternary structure, part of the 50S ribosomal subunit.

Its function is as follows. One of the primary rRNA binding proteins, this protein initially binds near the 5'-end of the 23S rRNA. It is important during the early stages of 50S assembly. It makes multiple contacts with different domains of the 23S rRNA in the assembled 50S subunit and ribosome. Functionally, forms part of the polypeptide exit tunnel. This chain is Large ribosomal subunit protein uL4, found in Mesorhizobium japonicum (strain LMG 29417 / CECT 9101 / MAFF 303099) (Mesorhizobium loti (strain MAFF 303099)).